We begin with the raw amino-acid sequence, 1387 residues long: Dicer-like protein 2-1 (1387 aa).

The Helicase ATP-binding domain occupies Met26 to Ala205. Met39–Thr46 contributes to the ATP binding site. The DEAH box motif lies at Asp146–His149. Residues Lys370–Arg535 form the Helicase C-terminal domain. Residues Ala565–Lys659 form the Dicer dsRNA-binding fold domain. RNase III domains are found at residues Ala915 to Gly1055 and Asp1094 to His1277. 3 residues coordinate Mg(2+): Glu1133, Asp1263, and Glu1266.

It belongs to the helicase family. Dicer subfamily. Requires Mg(2+) as cofactor. The cofactor is Mn(2+).

In terms of biological role, dicer-like endonuclease involved in cleaving double-stranded RNA in the RNA interference (RNAi) pathway. Produces 21 to 25 bp dsRNAs (siRNAs) which target the selective destruction of homologous RNAs leading to sequence-specific suppression of gene expression, called post-transcriptional gene silencing (PTGS). Part of a broad host defense response against viral infection and transposons. This is Dicer-like protein 2-1 (dcl2-1) from Aspergillus niger (strain ATCC MYA-4892 / CBS 513.88 / FGSC A1513).